An 867-amino-acid chain; its full sequence is MLTGNEIREKFIEFFMQKQHKHFESASLIPDDPTLLLTVAGMVPFKPYFLGQKEAPCPRVTTYQKCIRTNDLENVGRTARHHTFFEMLGNFSFGNYFKKEAIKWSWEFVTEVLKINKDKLWVTVFTTDDEAEKIWIEECNFPKERIVRMGESENWWSAGPTGSCGPCSEIHVDLGIQYGGDENSKIGDEGTDNRFIEIWNLVFTEWNRMEDGSLEPLPKKNIDTGAGLERIAAVVQGKTNNFETDLLFPILEEAGKITGSQYGKNPETNFSLKVITDHARAVTFLVNDGVIPSNEGRGYILRRILRRAVRHGRLLGYKDLFMYKMVDKVVEKFEIAYPDLRKNVENIRKIVKIEEEKFSNTLDQGIQLVNQEIDNLLTNGKNKLDGEISFKLYDTYGFPYELTEEIAEERGVIVLREEFEAKMEEQKEKARSAREVVMEKGQDSFIEEFYDKYGVTEFTGYEKTEDEGKLLSLREAKDRKYLLIFDKTPFYAESGGQVGDQGKIYSDNFAGKVLDVQKQKDIFIHTVKLEKGMPEENKTYKLEVDVVKRLDTAKNHTATHLLHKALREIVGTHVQQAGSLVDSEKLRFDFSHYEALTEEQLSKIEDIVNKKIREGIEVVVSHHSIEEAKKLGAMMLFGDKYGDVVRVVDVHGFSTELCGGTHIDNIGKIGLFKITSEGGIAAGVRRIEAKTGYGAYLVEKEEADILKNIEQKLKATNSNLVEKVEKNLETLKDTEKELEILKQKLALFETKAAISGMEEIGGVKVLIAAFKDKSTEDLRTMIDTIKDNNEKAIIVLASTQDKLAFAVGVTKTLTDKIKAGDLVKKLAEITGGKGGGRPDFAQAGGKDEGKLLDAFKEVREIIEAKLV.

Residues H556, H560, C658, and H662 each coordinate Zn(2+).

It belongs to the class-II aminoacyl-tRNA synthetase family. Zn(2+) is required as a cofactor.

It is found in the cytoplasm. The catalysed reaction is tRNA(Ala) + L-alanine + ATP = L-alanyl-tRNA(Ala) + AMP + diphosphate. In terms of biological role, catalyzes the attachment of alanine to tRNA(Ala) in a two-step reaction: alanine is first activated by ATP to form Ala-AMP and then transferred to the acceptor end of tRNA(Ala). Also edits incorrectly charged Ser-tRNA(Ala) and Gly-tRNA(Ala) via its editing domain. The chain is Alanine--tRNA ligase from Fusobacterium nucleatum subsp. nucleatum (strain ATCC 25586 / DSM 15643 / BCRC 10681 / CIP 101130 / JCM 8532 / KCTC 2640 / LMG 13131 / VPI 4355).